The primary structure comprises 80 residues: Small ribosomal subunit protein uS17 (80 aa).

The protein belongs to the universal ribosomal protein uS17 family. As to quaternary structure, part of the 30S ribosomal subunit.

In terms of biological role, one of the primary rRNA binding proteins, it binds specifically to the 5'-end of 16S ribosomal RNA. The protein is Small ribosomal subunit protein uS17 of Brucella suis (strain ATCC 23445 / NCTC 10510).